We begin with the raw amino-acid sequence, 224 residues long: UPF0758 protein PSPPH_0210 (224 aa).

Positions A102–M224 constitute an MPN domain. Zn(2+) is bound by residues H173, H175, and D186. Residues H173 to D186 carry the JAMM motif motif.

This sequence belongs to the UPF0758 family.

The chain is UPF0758 protein PSPPH_0210 from Pseudomonas savastanoi pv. phaseolicola (strain 1448A / Race 6) (Pseudomonas syringae pv. phaseolicola (strain 1448A / Race 6)).